The chain runs to 358 residues: Bis(monoacylglycero)phosphate synthase CLN5 (358 aa).

The interval 1 to 23 (MAQVGSAGPGACGRRGAGAGAGP) is disordered. Residues 1–29 (MAQVGSAGPGACGRRGAGAGAGPERTTWR) are Cytoplasmic-facing. Residues 7 to 21 (AGPGACGRRGAGAGA) show a composition bias toward gly residues. Residues 30 to 46 (WAPALLWLATAAAVAGD) traverse the membrane as a helical; Signal-anchor for type II membrane protein segment. Residues 47–358 (PSRRQWPVPY…NRKNRTLSGL (312 aa)) lie on the Lumenal side of the membrane. 2 cysteine pairs are disulfide-bonded: Cys-69–Cys-158 and Cys-76–Cys-164. The active-site Proton acceptor is the His-116. Asn-129, Asn-142, Asn-177, and Asn-202 each carry an N-linked (GlcNAc...) asparagine glycan. Cys-230 functions as the Nucleophile; Acyl-thioester intermediate in the catalytic mechanism. Asn-254, Asn-270, and Asn-280 each carry an N-linked (GlcNAc...) asparagine glycan. The tract at residues 303-342 (FLLSLLQIFDAVVIHREFYLFYNFEYWFLPMKYPFIKITY) is membrane-anchoring. The N-linked (GlcNAc...) asparagine glycan is linked to Asn-352.

It belongs to the CLN5 family. In terms of assembly, multimer. Interacts with SORT1, RAB5A and RAB7A. Interacts with PPT1, TPP1, CLN3, CLN6, CLN8, ATP5F1A and ATP5F1B. In terms of processing, N-glycosylated with both high mannose and complex type sugars. Glycosylation is important for proper folding and trafficking to the lysosomes. The type II membrane signal anchor is proteolytically cleaved to produce a mature form that is transported to the lysosomes (Bis(monoacylglycero)phosphate synthase CLN5, secreted form). Post-translationally, can undergo proteolytic cleavage at the C-terminus, probably by a cysteine protease and may involve the removal of approximately 10-15 residues from the C-terminal end.

It localises to the lysosome. Its subcellular location is the membrane. It catalyses the reaction S-hexadecanoyl-L-cysteinyl-[protein] + H2O = L-cysteinyl-[protein] + hexadecanoate + H(+). The enzyme catalyses 2 1-acyl-sn-glycero-3-phospho-(1'-sn-glycerol) = 1-acyl-sn-glycero-3-phospho-(3'-acyl-sn-1'-glycerol) + sn-glycero-3-phospho-(1'-sn-glycerol). The catalysed reaction is 2 1-(9Z-octadecenoyl)-sn-glycero-3-phospho-(1'-sn-glycerol) = 1-(9Z-octadecenoyl)-sn-glycero-3-phospho-(3'-(9Z-octadecenoyl)-1'-sn-glycerol) + sn-glycero-3-phospho-(1'-sn-glycerol). It carries out the reaction 2 1-octadecanoyl-sn-glycero-3-phospho-(1'-sn-glycerol) = 1-octadecanoyl-sn-glycero-3-phospho-(3'-octadecanoyl-1'-sn-glycerol) + sn-glycero-3-phospho-(1'-sn-glycerol). It catalyses the reaction 2 1-hexadecanoyl-sn-glycero-3-phospho-(1'-sn-glycerol) = 1-hexadecanoyl-sn-glycero-3-phospho-(3'-hexadecanoyl-1'-sn-glycerol) + sn-glycero-3-phospho-(1'-sn-glycerol). The enzyme catalyses 2 1-tetradecanoyl-sn-glycero-3-phospho-(1'-sn-glycerol) = 1-tetradecanoyl-sn-glycero-3-phospho-(3'-tetradecanoyl-1'-sn-glycerol) + sn-glycero-3-phospho-(1'-sn-glycerol). In terms of biological role, catalyzes the synthesis of bis(monoacylglycero)phosphate (BMP) via transacylation of 2 molecules of lysophosphatidylglycerol (LPG). BMP also known as lysobisphosphatidic acid plays a key role in the formation of intraluminal vesicles and in maintaining intracellular cholesterol homeostasis. Can use only LPG as the exclusive lysophospholipid acyl donor for base exchange and displays BMP synthase activity towards various LPGs (LPG 14:0, LPG 16:0, LPG 18:0, LPG 18:1) with a higher preference for longer chain lengths. Plays a role in influencing the retrograde trafficking of lysosomal sorting receptors SORT1 and IGF2R from the endosomes to the trans-Golgi network by controlling the recruitment of retromer complex to the endosomal membrane. Regulates the localization and activation of RAB7A which is required to recruit the retromer complex to the endosomal membrane. Its function is as follows. Exhibits palmitoyl protein thioesterase (S-depalmitoylation) activity in vitro and most likely plays a role in protein S-depalmitoylation. This Bos taurus (Bovine) protein is Bis(monoacylglycero)phosphate synthase CLN5 (CLN5).